Consider the following 237-residue polypeptide: ATP synthase subunit a (237 aa).

The next 6 membrane-spanning stretches (helical) occupy residues 18–38, 77–97, 103–123, 132–152, 185–205, and 209–229; these read STLW…VGTL, IFTL…PMAF, IAVT…LGFM, LFWV…IEVI, LILF…AIVA, and LEIL…CVYL.

It belongs to the ATPase A chain family. As to quaternary structure, F-type ATPases have 2 components, CF(1) - the catalytic core - and CF(0) - the membrane proton channel. CF(1) has five subunits: alpha(3), beta(3), gamma(1), delta(1), epsilon(1). CF(0) has three main subunits: a(1), b(2) and c(9-12). The alpha and beta chains form an alternating ring which encloses part of the gamma chain. CF(1) is attached to CF(0) by a central stalk formed by the gamma and epsilon chains, while a peripheral stalk is formed by the delta and b chains.

The protein resides in the cellular chromatophore membrane. Its function is as follows. Key component of the proton channel; it plays a direct role in the translocation of protons across the membrane. The polypeptide is ATP synthase subunit a (Rhodobacter capsulatus (Rhodopseudomonas capsulata)).